We begin with the raw amino-acid sequence, 1013 residues long: Poly [ADP-ribose] polymerase 1 (1013 aa).

N-acetylalanine is present on Ala2. The PARP-type 1 zinc-finger motif lies at 9-93 (YRVQYAKSGR…KVKKTAEAGG (85 aa)). The Zn(2+) site is built by Cys21 and Cys24. Ser41 bears the Phosphoserine mark. Zn(2+) is bound by residues His53 and Cys56. Lys97 and Lys105 each carry N6-acetyllysine. The PARP-type 2 zinc-finger motif lies at 113–203 (FAAEYAKSNR…ALKKQLPAIK (91 aa)). Residues Cys125 and Cys128 each contribute to the Zn(2+) site. Lys131 is subject to N6-acetyllysine. His159 and Cys162 together coordinate Zn(2+). Phosphoserine is present on residues Ser177, Ser179, and Ser185. Lys192 is covalently cross-linked (Glycyl lysine isopeptide (Lys-Gly) (interchain with G-Cter in SUMO2)). Residues 200–226 (PAIKNEGKRKGDEVDGTDEVAKKKSRK) form a disordered region. Lys203 participates in a covalent cross-link: Glycyl lysine isopeptide (Lys-Gly) (interchain with G-Cter in SUMO1); alternate. Lys203 participates in a covalent cross-link: Glycyl lysine isopeptide (Lys-Gly) (interchain with G-Cter in SUMO2); alternate. Basic and acidic residues predominate over residues 204-226 (NEGKRKGDEVDGTDEVAKKKSRK). 2 consecutive short sequence motifs (nuclear localization signal) follow at residues 207-209 (KRK) and 221-226 (KKKSRK). The PADR1 zinc-binding domain occupies 225 to 359 (RKETDKYSKL…VKKQDRIFPP (135 aa)). Lys249 participates in a covalent cross-link: Glycyl lysine isopeptide (Lys-Gly) (interchain with G-Cter in SUMO2). 2 positions are modified to phosphoserine: Ser274 and Ser277. The tract at residues 290-332 (GALLPCKECSGQLVFKSDAYYCTGDVTAWTKCMVKTQNPSRKE) is zinc ribbon. Zn(2+) is bound by residues Cys295, Cys298, Cys311, and Cys321. An automodification domain region spans residues 373–523 (VTSAPTAVNS…GVNKSEKRMK (151 aa)). In terms of domain architecture, BRCT spans 385-476 (PADKPLSNMK…KSLQDLLSAH (92 aa)). Asp387 is modified (polyADP-ribosyl aspartic acid). 8 positions are modified to polyADP-ribosyl glutamic acid: Glu407, Glu413, Glu435, Glu437, Glu444, Glu445, Glu448, and Glu456. A Glycyl lysine isopeptide (Lys-Gly) (interchain with G-Cter in SUMO2) cross-link involves residue Lys467. Glu484 bears the PolyADP-ribosyl glutamic acid mark. Residue Lys486 forms a Glycyl lysine isopeptide (Lys-Gly) (interchain with G-Cter in SUMO1); alternate linkage. Lys486 is covalently cross-linked (Glycyl lysine isopeptide (Lys-Gly) (interchain with G-Cter in SUMO2); alternate). Residues Glu488 and Glu491 each carry the polyADP-ribosyl glutamic acid modification. Residues 489–508 (PGEVVAPRGKSAAPSKKSKG) are disordered. Residues 494 to 503 (APRGKSAAPS) are compositionally biased toward low complexity. Residues Ser499, Ser503, and Ser506 each carry the ADP-ribosylserine modification. Lys511 is covalently cross-linked (Glycyl lysine isopeptide (Lys-Gly) (interchain with G-Cter in SUMO2)). 2 positions are modified to polyADP-ribosyl glutamic acid: Glu512 and Glu513. ADP-ribosylserine is present on Ser518. Glu519 is modified (polyADP-ribosyl glutamic acid). Lys520 is modified (N6-(ADP-ribosyl)lysine). Residue Lys527 forms a Glycyl lysine isopeptide (Lys-Gly) (interchain with G-Cter in SUMO2) linkage. In terms of domain architecture, WGR spans 541-637 (SAHVLEKGGK…KNFTKYPKKF (97 aa)). Thr593 carries the phosphothreonine modification. N6-acetyllysine is present on residues Lys599 and Lys620. Residues 661–778 (KSKLPKPVQE…DIEVAYSLLR (118 aa)) form the PARP alpha-helical domain. A Glycyl lysine isopeptide (Lys-Gly) (interchain with G-Cter in SUMO1); alternate cross-link involves residue Lys747. Lys747 participates in a covalent cross-link: Glycyl lysine isopeptide (Lys-Gly) (interchain with G-Cter in SUMO2); alternate. Phosphoserine occurs at positions 781 and 785. Positions 787–1013 (DPIDVNYEKL…LKFNFKTSLW (227 aa)) constitute a PARP catalytic domain. Residues 861–863 (HGS), Gly870, Arg877, and Ser903 each bind NAD(+). Glu987 serves as the catalytic For poly [ADP-ribose] polymerase activity.

It belongs to the ARTD/PARP family. In terms of assembly, homodimer; PARP-type zinc-fingers from separate PARP1 molecules form a dimer module that specifically recognizes DNA strand breaks. Heterodimer; heterodimerizes with PARP2. Interacts (via the PARP catalytic domain) with HPF1. Interacts with NMNAT1. Interacts with nucleosomes; with a preference for nucleosomes containing H2A.X. Interacts with APTX. Component of a base excision repair (BER) complex, containing at least XRCC1, PARP1, PARP2, POLB and LRIG3. Interacts with SRY. The SWAP complex consists of NPM1, NCL, PARP1 and SWAP70. Interacts with TIAM2. Interacts with PARP3; leading to activate PARP1 in absence of DNA. Interacts (when poly-ADP-ribosylated) with CHD1L (via macro domain). Interacts with the DNA polymerase alpha catalytic subunit POLA1; this interaction functions as part of the control of replication fork progression. Interacts with EEF1A1 and TXK. Interacts with RNF4. Interacts with RNF146. Interacts with ZNF423. Interacts with APLF. Interacts with SNAI1 (via zinc fingers); the interaction requires SNAI1 to be poly-ADP-ribosylated and non-phosphorylated (active) by GSK3B. Interacts (when poly-ADP-ribosylated) with PARP9. Interacts with NR4A3; activates PARP1 by improving acetylation of PARP1 and suppressing the interaction between PARP1 and SIRT1. Interacts (via catalytic domain) with PUM3; the interaction inhibits the poly-ADP-ribosylation activity of PARP1 and the degradation of PARP1 by CASP3 following genotoxic stress. Interacts with ZNF365. Interacts with RRP1B. Interacts with TIMELESS; the interaction is direct. Interacts with CGAS; leading to impede the formation of the PARP1-TIMELESS complex. Interacts with KHDC3L, the interaction is increased following the formation of DNA double-strand breaks. Interacts (when auto-poly-ADP-ribosylated) with XRCC1; leading to inhibit PARP1 ADP-ribosyltransferase activity. Interacts with SPINDOC; promoting PARP1 ADP-ribosyltransferase activity. Interacts with BANF1; leading to inhibit PARP1 ADP-ribosyltransferase activity in response to oxidative DNA damage. Interacts (when sumoylated and ubiquitinated) with VCP/p97; leading to its extraction from chromatin. Interacts with YARS1; promoting PARP1 ADP-ribosyltransferase activity. Interacts with PACMP micropeptide; Interacts with PACMP micropeptide; interaction. Interacts (when poly-ADP-ribosylated) with isoform 1 of MACROH2A1; MACROH2A1 specifically binds to poly-ADP-ribose chains and inhibits PARP1 activity, limiting the consumption of nuclear NAD(+). Interacts with CARM1; promoting recruitment to replication forks. Interacts with RECQL. Interacts with ZNF32; the interaction reshapes ZNF432 interacting proteins. Interacts with TPRN; TPRN interacts with a number of DNA damage response proteins, is recruited to sites of DNA damage and may play a role in DNA damage repair. As to quaternary structure, interacts (when auto-poly-ADP-ribosylated) with AIFM1. Post-translationally, poly-ADP-ribosylated on serine, glutamate and aspartate residues by autocatalysis. Auto-ADP-ribosylation on serine takes place following interaction with HPF1. Auto poly-ADP-ribosylation on serine residues promotes its dissociation from chromatin. Poly-ADP-ribosylated by PARP2; poly-ADP-ribosylation mediates the recruitment of CHD1L to DNA damage sites. Mono-ADP-ribosylated at Lys-520 by SIRT6 in response to oxidative stress, promoting recruitment to double-strand breaks (DSBs) sites. S-nitrosylated, leading to inhibit transcription regulation activity. In terms of processing, phosphorylated at Thr-593 by PRKDC in response to DNA damage following virus infection, promoting its translocation to the cytosol. Phosphorylated by TXK. Post-translationally, proteolytically cleaved by caspase-3 (CASP3) and caspase-7 (CASP7) in response to apoptosis to generate the Poly [ADP-ribose] polymerase 1, processed N-terminus and Poly [ADP-ribose] polymerase 1, processed C-terminus forms. Sumoylated with SUMO1 or SUMO2 by PIAS4 following prolonged residence (trapping) to chromatin. Sumoylation promotes ubiquitination by RNF4 and removal from chromatin by VCP/p97. In terms of processing, ubiquitinated by RNF4 following sumoylation by PIAS4 in response to prolonged residence (trapping) to chromatin. Ubiquitination promotes removal from chromatin by VCP/p97. In terms of tissue distribution, widely expressed. Expression is correlated with proliferation, with higher levels occurring during early fetal development and organogenesis and in the highly proliferative cell compartments of adult. Expressed in B-cells that have been induced to switch to various Ig isotypes.

It is found in the chromosome. It localises to the nucleus. Its subcellular location is the nucleolus. The protein localises to the cytoplasm. The protein resides in the cytosol. The enzyme catalyses NAD(+) + (ADP-D-ribosyl)n-acceptor = nicotinamide + (ADP-D-ribosyl)n+1-acceptor + H(+).. The catalysed reaction is L-seryl-[protein] + NAD(+) = O-(ADP-D-ribosyl)-L-seryl-[protein] + nicotinamide + H(+). It carries out the reaction L-aspartyl-[protein] + NAD(+) = 4-O-(ADP-D-ribosyl)-L-aspartyl-[protein] + nicotinamide. It catalyses the reaction L-glutamyl-[protein] + NAD(+) = 5-O-(ADP-D-ribosyl)-L-glutamyl-[protein] + nicotinamide. The enzyme catalyses L-tyrosyl-[protein] + NAD(+) = O-(ADP-D-ribosyl)-L-tyrosyl-[protein] + nicotinamide + H(+). The catalysed reaction is L-histidyl-[protein] + NAD(+) = N(tele)-(ADP-D-ribosyl)-L-histidyl-[protein] + nicotinamide + H(+). ADP-ribosyltransferase activity is regulated via an allosteric activation mechanism. In absence of activation signal, PARP1 is autoinhibited by the PARP alpha-helical domain (also named HD region), which prevents effective NAD(+)-binding. Activity is highly stimulated by signals, such as DNA strand breaks. Binding to damaged DNA unfolds the PARP alpha-helical domain, relieving autoinhibition. Poly-ADP-ribosyltransferase activity is tightly regulated and PARP1 is removed from damaged chromatin following initial poly-ADP-ribosylation of chromatin to avoid prolonged residence (trapping) that has cytotoxic consequences. A number of factors (VCP/p97) or post-translational modifications (auto-poly-ADP-ribosylation or ubiquitination) promote PARP1 removal from chromatin. Poly-ADP-ribosyltransferase that mediates poly-ADP-ribosylation of proteins and plays a key role in DNA repair. Mediates glutamate, aspartate, serine, histidine or tyrosine ADP-ribosylation of proteins: the ADP-D-ribosyl group of NAD(+) is transferred to the acceptor carboxyl group of target residues and further ADP-ribosyl groups are transferred to the 2'-position of the terminal adenosine moiety, building up a polymer with an average chain length of 20-30 units. Serine ADP-ribosylation of proteins constitutes the primary form of ADP-ribosylation of proteins in response to DNA damage. Specificity for the different amino acids is conferred by interacting factors, such as HPF1 and NMNAT1. Following interaction with HPF1, catalyzes serine ADP-ribosylation of target proteins; HPF1 confers serine specificity by completing the PARP1 active site. Also catalyzes tyrosine ADP-ribosylation of target proteins following interaction with HPF1. Following interaction with NMNAT1, catalyzes glutamate and aspartate ADP-ribosylation of target proteins; NMNAT1 confers glutamate and aspartate specificity. PARP1 initiates the repair of DNA breaks: recognizes and binds DNA breaks within chromatin and recruits HPF1, licensing serine ADP-ribosylation of target proteins, such as histones (H2BS6ADPr and H3S10ADPr), thereby promoting decompaction of chromatin and the recruitment of repair factors leading to the reparation of DNA strand breaks. HPF1 initiates serine ADP-ribosylation but restricts the polymerase activity of PARP1 in order to limit the length of poly-ADP-ribose chains. In addition to base excision repair (BER) pathway, also involved in double-strand breaks (DSBs) repair: together with TIMELESS, accumulates at DNA damage sites and promotes homologous recombination repair by mediating poly-ADP-ribosylation. Mediates the poly-ADP-ribosylation of a number of proteins, including itself, APLF, CHFR and NFAT5. In addition to proteins, also able to ADP-ribosylate DNA: catalyzes ADP-ribosylation of DNA strand break termini containing terminal phosphates and a 2'-OH group in single- and double-stranded DNA, respectively. Required for PARP9 and DTX3L recruitment to DNA damage sites. PARP1-dependent PARP9-DTX3L-mediated ubiquitination promotes the rapid and specific recruitment of 53BP1/TP53BP1, UIMC1/RAP80, and BRCA1 to DNA damage sites. PARP1-mediated DNA repair in neurons plays a role in sleep: senses DNA damage in neurons and promotes sleep, facilitating efficient DNA repair. In addition to DNA repair, also involved in other processes, such as transcription regulation, programmed cell death, membrane repair, adipogenesis and innate immunity. Acts as a repressor of transcription: binds to nucleosomes and modulates chromatin structure in a manner similar to histone H1, thereby altering RNA polymerase II. Acts both as a positive and negative regulator of transcription elongation, depending on the context. Acts as a positive regulator of transcription elongation by mediating poly-ADP-ribosylation of NELFE, preventing RNA-binding activity of NELFE and relieving transcription pausing. Acts as a negative regulator of transcription elongation in response to DNA damage by catalyzing poly-ADP-ribosylation of CCNT1, disrupting the phase separation activity of CCNT1 and subsequent activation of CDK9. Involved in replication fork progression following interaction with CARM1: mediates poly-ADP-ribosylation at replication forks, slowing fork progression. Poly-ADP-ribose chains generated by PARP1 also play a role in poly-ADP-ribose-dependent cell death, a process named parthanatos. Also acts as a negative regulator of the cGAS-STING pathway. Acts by mediating poly-ADP-ribosylation of CGAS: PARP1 translocates into the cytosol following phosphorylation by PRKDC and catalyzes poly-ADP-ribosylation and inactivation of CGAS. Acts as a negative regulator of adipogenesis: catalyzes poly-ADP-ribosylation of histone H2B on 'Glu-35' (H2BE35ADPr) following interaction with NMNAT1, inhibiting phosphorylation of H2B at 'Ser-36' (H2BS36ph), thereby blocking expression of pro-adipogenetic genes. Involved in the synthesis of ATP in the nucleus, together with NMNAT1, PARG and NUDT5. Nuclear ATP generation is required for extensive chromatin remodeling events that are energy-consuming. Its function is as follows. Promotes AIFM1-mediated apoptosis. This form, which translocates into the cytoplasm following cleavage by caspase-3 (CASP3) and caspase-7 (CASP7) in response to apoptosis, is auto-poly-ADP-ribosylated and serves as a poly-ADP-ribose carrier to induce AIFM1-mediated apoptosis. Functionally, this cleavage form irreversibly binds to DNA breaks and interferes with DNA repair, promoting DNA damage-induced apoptosis. This is Poly [ADP-ribose] polymerase 1 (Parp1) from Mus musculus (Mouse).